We begin with the raw amino-acid sequence, 338 residues long: Cytochrome c biogenesis protein CcsA (338 aa).

8 helical membrane passes run 11 to 31 (VLLD…YWLA), 39 to 59 (LLHE…TGLL), 76 to 96 (ESLF…EAFA), 100 to 120 (LVGV…SLTL), 145 to 165 (VMIL…AFLI), 244 to 264 (LIGL…VWAN), 278 to 295 (TWSL…HARI), and 305 to 325 (ATLA…VNFL).

The protein belongs to the CcmF/CycK/Ccl1/NrfE/CcsA family. May interact with ccs1.

The protein localises to the cell inner membrane. Its function is as follows. Required during biogenesis of c-type cytochromes (cytochrome c6 and cytochrome f) at the step of heme attachment. In Gloeobacter violaceus (strain ATCC 29082 / PCC 7421), this protein is Cytochrome c biogenesis protein CcsA.